We begin with the raw amino-acid sequence, 273 residues long: Shikimate dehydrogenase (NADP(+)) (273 aa).

Residues 15–17 (SKS) and Thr-62 contribute to the shikimate site. Lys-66 (proton acceptor) is an active-site residue. Asp-78 is a binding site for NADP(+). Shikimate-binding residues include Asn-87 and Asp-103. NADP(+)-binding positions include 127-131 (GAGGA), 150-155 (NRTHTR), Ala-218, and Gly-238.

This sequence belongs to the shikimate dehydrogenase family. As to quaternary structure, homodimer.

It catalyses the reaction shikimate + NADP(+) = 3-dehydroshikimate + NADPH + H(+). Its pathway is metabolic intermediate biosynthesis; chorismate biosynthesis; chorismate from D-erythrose 4-phosphate and phosphoenolpyruvate: step 4/7. In terms of biological role, involved in the biosynthesis of the chorismate, which leads to the biosynthesis of aromatic amino acids. Catalyzes the reversible NADPH linked reduction of 3-dehydroshikimate (DHSA) to yield shikimate (SA). The sequence is that of Shikimate dehydrogenase (NADP(+)) from Yersinia pseudotuberculosis serotype O:1b (strain IP 31758).